The chain runs to 188 residues: Apolipoprotein M (188 aa).

The not cleaved signal peptide spans 1-22 (MFHQIWAALLYFYGIILNSIYQ). 3 cysteine pairs are disulfide-bonded: Cys23–Cys167, Cys95–Cys183, and Cys128–Cys157. Asn135 carries N-linked (GlcNAc...) asparagine glycosylation. Residues Glu136 and Arg143 each coordinate tetradecanoate.

The protein belongs to the calycin superfamily. Lipocalin family. Highly divergent. Interacts with LRP2; LRP2 mediates APOM renal uptake and subsequent lysosomal degradation. As to expression, plasma protein. Expressed in liver and kidney.

It is found in the secreted. Its function is as follows. Probably involved in lipid transport. Can bind sphingosine-1-phosphate, myristic acid, palmitic acid and stearic acid, retinol, all-trans-retinoic acid and 9-cis-retinoic acid. This Homo sapiens (Human) protein is Apolipoprotein M (APOM).